Here is a 1154-residue protein sequence, read N- to C-terminus: Coiled-coil domain-containing protein 136 (1154 aa).

Residues 1–48 (MQAMEGEVLLPALYEEEEEEEEEEEEVEEEEEQVQKGGSVGSLSVNKH) form a disordered region. The span at 14 to 32 (YEEEEEEEEEEEEVEEEEE) shows a compositional bias: acidic residues. Residue S52 is modified to Phosphoserine. 2 coiled-coil regions span residues 696 to 733 (QAKQELLQQEQGRLLEERKRLQADLQLCLEEMQLLQVQ) and 859 to 974 (KLQA…RPSV). Over residues 1031-1058 (DGLAKEEEKKEEMEEEKKQVKEEAKEQC) the composition is skewed to basic and acidic residues. The interval 1031–1131 (DGLAKEEEKK…SSPTPNPPIF (101 aa)) is disordered. Residues 1077–1109 (DQEENEEDKEEEEKEEDSEEEEDDADSSLESPE) show a composition bias toward acidic residues. Residues 1130–1150 (IFSLPLVGLVVISALLWCWWA) traverse the membrane as a helical segment.

As to expression, expressed in gastric tissues. Down-regulated in gastric cancer.

The protein resides in the cytoplasmic vesicle. The protein localises to the secretory vesicle. Its subcellular location is the acrosome membrane. Functionally, may play a role in acrosome formation in spermatogenesis and in fertilization. This Homo sapiens (Human) protein is Coiled-coil domain-containing protein 136 (CCDC136).